The sequence spans 273 residues: Putative methyltransferase Cher3 (273 aa).

One can recognise a CheR-type methyltransferase domain in the interval 1–273; the sequence is MTSERNTDIE…VKPQRIFRKS (273 aa). Residues serine 76, arginine 80, glutamate 114, aspartate 137, 199 to 200, and 215 to 216 contribute to the S-adenosyl-L-methionine site; these read SL and RN.

In Pseudomonas putida (strain ATCC 47054 / DSM 6125 / CFBP 8728 / NCIMB 11950 / KT2440), this protein is Putative methyltransferase Cher3 (cheR3).